A 250-amino-acid polypeptide reads, in one-letter code: Aminoglycoside 3'-phosphotransferase (250 aa).

Aspartate 178 functions as the Proton acceptor in the catalytic mechanism.

Belongs to the aminoglycoside phosphotransferase family.

It catalyses the reaction kanamycin A + ATP = kanamycin 3'-phosphate + ADP + H(+). Its function is as follows. Resistance to kanamycin and structurally-related aminoglycosides, including amikacin. The protein is Aminoglycoside 3'-phosphotransferase (aphA-7) of Campylobacter jejuni.